A 430-amino-acid chain; its full sequence is Dihydroorotase (430 aa).

Zn(2+) contacts are provided by H57 and H59. Residues 59-61 and N91 each bind substrate; that span reads HLR. Residues D151, H178, and H231 each contribute to the Zn(2+) site. N277 provides a ligand contact to substrate. D304 is a binding site for Zn(2+). Residue D304 is part of the active site. Substrate contacts are provided by residues H308 and 322 to 323; that span reads PG.

This sequence belongs to the metallo-dependent hydrolases superfamily. DHOase family. Class I DHOase subfamily. Zn(2+) is required as a cofactor.

The enzyme catalyses (S)-dihydroorotate + H2O = N-carbamoyl-L-aspartate + H(+). The protein operates within pyrimidine metabolism; UMP biosynthesis via de novo pathway; (S)-dihydroorotate from bicarbonate: step 3/3. Catalyzes the reversible cyclization of carbamoyl aspartate to dihydroorotate. The chain is Dihydroorotase from Mycobacterium tuberculosis (strain ATCC 25618 / H37Rv).